The primary structure comprises 376 residues: N-acetyldiaminopimelate deacetylase (376 aa).

Residue Asp69 is part of the active site. Glu128 functions as the Proton acceptor in the catalytic mechanism.

It belongs to the peptidase M20A family. N-acetyldiaminopimelate deacetylase subfamily.

It carries out the reaction N-acetyl-(2S,6S)-2,6-diaminopimelate + H2O = (2S,6S)-2,6-diaminopimelate + acetate. Its pathway is amino-acid biosynthesis; L-lysine biosynthesis via DAP pathway; LL-2,6-diaminopimelate from (S)-tetrahydrodipicolinate (acetylase route): step 3/3. Its function is as follows. Catalyzes the conversion of N-acetyl-diaminopimelate to diaminopimelate and acetate. This Streptococcus pneumoniae serotype 19F (strain G54) protein is N-acetyldiaminopimelate deacetylase.